The chain runs to 311 residues: Olfactory receptor 2M4 (311 aa).

Over 1–25 (MVWENQTFNSIFILLGIFNHSPTHT) the chain is Extracellular. Asparagine 5 carries N-linked (GlcNAc...) asparagine glycosylation. A helical transmembrane segment spans residues 26–49 (FLFSLVLGIFSLALMENISMVLLI). The Cytoplasmic portion of the chain corresponds to 50–57 (YIEKQLHT). A helical membrane pass occupies residues 58–79 (PMYFLLSQLSLMDLMLICTTLP). The Extracellular segment spans residues 80 to 100 (KMIFSYLSGKKSISLAGCGTQ). Cysteine 97 and cysteine 189 are joined by a disulfide. The chain crosses the membrane as a helical span at residues 101 to 120 (IFFYVSLLGAECFLLAVMAY). Residues 121 to 139 (DRYVAICHPLQYTILMNPK) are Cytoplasmic-facing. Residues 140 to 158 (LCVFMTVASWTLGSLDGII) form a helical membrane-spanning segment. The Extracellular portion of the chain corresponds to 159-195 (VLAAVLSFSYCSSLEIHHFFCDVAALLPLSCTETSAF). Residues 196 to 219 (ERLLVICCVVMLIFPVSVIILSYS) traverse the membrane as a helical segment. The Cytoplasmic segment spans residues 220-236 (HVLRAVIHMGSGESRRK). A helical transmembrane segment spans residues 237 to 259 (AFTTCSSHLSVVGLYYGAAMFMY). The Extracellular portion of the chain corresponds to 260–272 (MRPASKHTPDQDK). Residues 273-292 (MVSAFYTILTPMLNPLIYSL) form a helical membrane-spanning segment. The Cytoplasmic portion of the chain corresponds to 293-311 (RNKEVFRALQKVLKKRKLI).

It belongs to the G-protein coupled receptor 1 family.

It localises to the cell membrane. Its function is as follows. Odorant receptor. This is Olfactory receptor 2M4 (OR2M4) from Homo sapiens (Human).